We begin with the raw amino-acid sequence, 486 residues long: MNADAKTEIKGRERYKAGVLKYAQMGYWNGDYEPKDTDLIALFRITPQDGVDPIEAAAAVAGESSTATWTVVWTDRLTACDQYRAKAYRVDPVPGTPGQYFCYVAYDLILFEEGSIANLTASIIGNVFSFKPLKAARLEDMRLPVAYVKTFKGPPTGIVVERERLDKFGKPLLGATTKPKLGLSGKNYGRVVYEGLKGGLDFMKDDENINSQPFMHWRDRYLYCMEAVNHASAVTGEVKGHYLNVTAGTMEEMYRRAEFAKELGSVIVMVDLIIGWTAIQSMSEWCRQNDMILHMHRAGHGTYTRQKNHGISFRVIAKWLRLAGVDHLHAGTAVGKLEGDPLTVQGYYNVCREMKNAVDLPRGLFFEQDWADLKKVLPVASGGIHAGQMHQLLDLFGDDVVLQFGGGTIGHPMGIQAGATANRVALEAMVLARNEGRDIAHEGPEILRAAAKWCKPLEAALDTWGNISFNYTPTDTSDFVPSVTAA.

Asn126 and Thr176 together coordinate substrate. Catalysis depends on Lys178, which acts as the Proton acceptor. Lys180 lines the substrate pocket. Mg(2+) is bound by residues Lys204, Asp206, and Glu207. Lys204 carries the N6-carboxylysine modification. His296 functions as the Proton acceptor in the catalytic mechanism. Substrate contacts are provided by Arg297, His329, and Ser381.

Belongs to the RuBisCO large chain family. Type I subfamily. Heterohexadecamer of 8 large chains and 8 small chains. It depends on Mg(2+) as a cofactor.

It carries out the reaction 2 (2R)-3-phosphoglycerate + 2 H(+) = D-ribulose 1,5-bisphosphate + CO2 + H2O. The enzyme catalyses D-ribulose 1,5-bisphosphate + O2 = 2-phosphoglycolate + (2R)-3-phosphoglycerate + 2 H(+). Its function is as follows. RuBisCO catalyzes two reactions: the carboxylation of D-ribulose 1,5-bisphosphate, the primary event in carbon dioxide fixation, as well as the oxidative fragmentation of the pentose substrate. Both reactions occur simultaneously and in competition at the same active site. This is Ribulose bisphosphate carboxylase large chain from Sinorhizobium medicae (strain WSM419) (Ensifer medicae).